A 68-amino-acid chain; its full sequence is Large ribosomal subunit protein uL29 (68 aa).

Belongs to the universal ribosomal protein uL29 family.

In Albidiferax ferrireducens (strain ATCC BAA-621 / DSM 15236 / T118) (Rhodoferax ferrireducens), this protein is Large ribosomal subunit protein uL29.